The chain runs to 337 residues: Monoacylglycerol lipase abhd6-A (337 aa).

Over 1–19 (MDLDVLNMFLVAGGTLLVP) the chain is Extracellular. The helical; Signal-anchor for type II membrane protein transmembrane segment at 20–42 (ILAFVTSFLLWPAALIKIYYWYW) threads the bilayer. At 43–337 (RRALGMQVKF…QSTENNKKHE (295 aa)) the chain is on the cytoplasmic side. The region spanning 73-313 (SVLMLHGFSA…CGHSVVMERP (241 aa)) is the AB hydrolase-1 domain. Ser148 functions as the Nucleophile in the catalytic mechanism. Residues Asp278 and His306 each act as charge relay system in the active site.

This sequence belongs to the AB hydrolase superfamily.

Its subcellular location is the late endosome membrane. The protein resides in the lysosome membrane. The protein localises to the mitochondrion membrane. It carries out the reaction Hydrolyzes glycerol monoesters of long-chain fatty acids.. The enzyme catalyses 1-octanoylglycerol + H2O = octanoate + glycerol + H(+). The catalysed reaction is 1-decanoylglycerol + H2O = decanoate + glycerol + H(+). It catalyses the reaction 1-dodecanoylglycerol + H2O = dodecanoate + glycerol + H(+). It carries out the reaction 1-tetradecanoylglycerol + H2O = tetradecanoate + glycerol + H(+). The enzyme catalyses 2-hexadecanoylglycerol + H2O = glycerol + hexadecanoate + H(+). The catalysed reaction is 2-(9Z-octadecenoyl)-glycerol + H2O = glycerol + (9Z)-octadecenoate + H(+). It catalyses the reaction 1-(9Z-octadecenoyl)-glycerol + H2O = glycerol + (9Z)-octadecenoate + H(+). It carries out the reaction 2-(9Z,12Z-octadecadienoyl)-glycerol + H2O = (9Z,12Z)-octadecadienoate + glycerol + H(+). The enzyme catalyses 2-(5Z,8Z,11Z,14Z-eicosatetraenoyl)-glycerol + H2O = glycerol + (5Z,8Z,11Z,14Z)-eicosatetraenoate + H(+). The catalysed reaction is 1-(5Z,8Z,11Z,14Z-eicosatetraenoyl)-glycerol + H2O = glycerol + (5Z,8Z,11Z,14Z)-eicosatetraenoate + H(+). It catalyses the reaction 1-(9Z,12Z-octadecadienoyl)-glycerol + H2O = (9Z,12Z)-octadecadienoate + glycerol + H(+). It carries out the reaction 3-(9Z-octadecenoyl)-sn-glycero-1-phospho-(3'-(9Z-octadecenoyl)-1'-sn-glycerol) + H2O = 3-(9Z-octadecenoyl)-sn-glycero-1-phospho-(1'-sn-glycerol) + (9Z)-octadecenoate + H(+). The enzyme catalyses (S,S)-2-(9Z-octadecenoyl)-sn-glycero-1-phospho-(2'-(9Z-octadecenoyl)-1'-sn-glycerol) + H2O = (S,S)-2-(9Z-octadecenoyl)-sn-glycero-1-phospho-(1'-sn-glycerol) + (9Z)-octadecenoate + H(+). The catalysed reaction is (R,R)-2-(9Z-octadecenoyl)-sn-glycero-3-phospho-(2'-(9Z-octadecenoyl)-3'-sn-glycerol) + H2O = (R,R)-2-(9Z-octadecenoyl)-sn-glycero-3-phospho-(3'-sn-glycerol) + (9Z)-octadecenoate + H(+). Its function is as follows. Lipase that preferentially hydrolysis medium-chain saturated monoacylglycerols including 2-arachidonoylglycerol. Through 2-arachidonoylglycerol degradation may regulate endocannabinoid signaling pathways. Also has a lysophosphatidyl lipase activity with a preference for lysophosphatidylglycerol among other lysophospholipids. Also able to degrade bis(monoacylglycero)phosphate (BMP) and constitutes the major enzyme for BMP catabolism. BMP, also known as lysobisphosphatidic acid, is enriched in late endosomes and lysosomes and plays a key role in the formation of intraluminal vesicles and in lipid sorting. The chain is Monoacylglycerol lipase abhd6-A (abhd6-a) from Xenopus laevis (African clawed frog).